A 142-amino-acid polypeptide reads, in one-letter code: Large ribosomal subunit protein uL13 (142 aa).

This sequence belongs to the universal ribosomal protein uL13 family. In terms of assembly, part of the 50S ribosomal subunit.

Its function is as follows. This protein is one of the early assembly proteins of the 50S ribosomal subunit, although it is not seen to bind rRNA by itself. It is important during the early stages of 50S assembly. This chain is Large ribosomal subunit protein uL13, found in Maridesulfovibrio salexigens (strain ATCC 14822 / DSM 2638 / NCIMB 8403 / VKM B-1763) (Desulfovibrio salexigens).